Reading from the N-terminus, the 384-residue chain is Carbazole 1,9a-dioxygenase, terminal oxygenase component CarAa (384 aa).

The Rieske domain maps to 29–135; sequence WYPVMFSKEI…VQEAKGCVFI (107 aa). Residues Cys-69, His-71, Cys-90, and His-93 each coordinate [2Fe-2S] cluster.

Homotrimer. Carbazole 1,9a-dioxygenase complex consists of a terminal oxygenase component CarAa, a ferredoxin reductase component CarAd and a ferredoxin component CarAc. [2Fe-2S] cluster is required as a cofactor.

It catalyses the reaction 9H-carbazole + NADH + O2 + H(+) = 2'-aminobiphenyl-2,3-diol + NAD(+). It carries out the reaction 9H-carbazole + NADPH + O2 + H(+) = 2'-aminobiphenyl-2,3-diol + NADP(+). Its function is as follows. Part of the multicomponent carbazole 1,9a-dioxygenase (CARDO), that converts carbazole (CAR) into 2-aminobiphenyl-2,3-diol. Catalyzes the dioxygenation at the angular (C-9a) and adjacent (C-1) positions of carbazole to yield a highly unstable cis-hydrodiol intermediate which is spontaneously converted to 2-aminobiphenyl-2,3-diol. It is also able to attack the angular position adjacent of hetero atom of heterocyclic aromatic compounds such as polychlorinated dibenzo-p-dioxin (DD) and dibenzofuran (DBF). It was also shown that CARDO has the ability to metabolize biphenyl and polycyclic aromatic hydrocarbons, such as naphthalene and phenanthrene. This chain is Carbazole 1,9a-dioxygenase, terminal oxygenase component CarAa (carAa), found in Metapseudomonas resinovorans (Pseudomonas resinovorans).